Consider the following 378-residue polypeptide: Actin-related protein 2/3 complex subunit 1B (378 aa).

WD repeat units lie at residues R8–R47, K53–T92, R97–K138, R143–K182, L203–Q242, I257–S295, and V331–G375. Residues T319–V340 form a disordered region.

It belongs to the WD repeat ARPC1 family. In terms of assembly, component of the Arp2/3 complex composed of ARP2, ARP3, ARPC1/p41-ARC, ARPC2/p34-ARC, ARPC3/p21-ARC, ARPC4/p20-ARC and ARPC5/p16-ARC. Expressed at low levels in all tissues with a relatively highest expression in inflorescences.

The protein localises to the cytoplasm. It localises to the cytoskeleton. Its function is as follows. Functions as a component of the Arp2/3 complex which is involved in regulation of actin polymerization and together with an activating nucleation-promoting factor (NPF) mediates the formation of branched actin networks. Arp2/3 complex plays a critical role in the control of cell morphogenesis via the modulation of cell polarity development. The protein is Actin-related protein 2/3 complex subunit 1B (ARPC1B) of Arabidopsis thaliana (Mouse-ear cress).